A 188-amino-acid chain; its full sequence is Interferon alpha-2 (188 aa).

An N-terminal signal peptide occupies residues 1-23; it reads MALTFALLVALLVLSCKSSCSVG. 2 disulfides stabilise this stretch: Cys-24–Cys-121 and Cys-52–Cys-161. Residue Thr-129 is glycosylated (O-linked (GalNAc...) threonine).

Belongs to the alpha/beta interferon family. Interacts with IFNAR2.

It is found in the secreted. Produced by macrophages, IFN-alpha have antiviral activities. In Homo sapiens (Human), this protein is Interferon alpha-2 (IFNA2).